A 134-amino-acid polypeptide reads, in one-letter code: Small ribosomal subunit protein bS16 (134 aa).

Residues 79–134 are disordered; sequence AGIAKRPSRNNPTKGEPGKKAQERLALAKQAEEEAAAKAAEAAAAAAAPAEEAASE. Over residues 115–134 the composition is skewed to low complexity; the sequence is AKAAEAAAAAAAPAEEAASE.

Belongs to the bacterial ribosomal protein bS16 family.

This is Small ribosomal subunit protein bS16 from Brucella suis (strain ATCC 23445 / NCTC 10510).